A 251-amino-acid polypeptide reads, in one-letter code: tRNA (guanine-N(1)-)-methyltransferase (251 aa).

S-adenosyl-L-methionine-binding positions include Gly113 and 133-138 (MGDYVL).

It belongs to the RNA methyltransferase TrmD family. In terms of assembly, homodimer.

Its subcellular location is the cytoplasm. The enzyme catalyses guanosine(37) in tRNA + S-adenosyl-L-methionine = N(1)-methylguanosine(37) in tRNA + S-adenosyl-L-homocysteine + H(+). Its function is as follows. Specifically methylates guanosine-37 in various tRNAs. This Sodalis glossinidius (strain morsitans) protein is tRNA (guanine-N(1)-)-methyltransferase.